The primary structure comprises 84 residues: Small ribosomal subunit protein uS17 (84 aa).

Belongs to the universal ribosomal protein uS17 family. In terms of assembly, part of the 30S ribosomal subunit.

In terms of biological role, one of the primary rRNA binding proteins, it binds specifically to the 5'-end of 16S ribosomal RNA. In Glaesserella parasuis serovar 5 (strain SH0165) (Haemophilus parasuis), this protein is Small ribosomal subunit protein uS17.